Here is a 165-residue protein sequence, read N- to C-terminus: MKSIYITGYMGAGKTTIGKALSKELHMDVVDTDQKIEEKQGKVIRDIFAEEGEMAFREYESEMLCSLPVDNVIITTGGGIVEREENRKWMKENGTVVYLYCDPHVIAERLREDTTRPLFQKKDIDAFVTKFESRRAYYEEAHIHIDTTNKSVKQIMNELKEKINE.

11–16 (GAGKTT) contacts ATP. Position 15 (T15) interacts with Mg(2+). Substrate-binding residues include D33, R57, and G78. R116 contacts ATP. Substrate is bound at residue R134.

Belongs to the shikimate kinase family. Monomer. The cofactor is Mg(2+).

It is found in the cytoplasm. The enzyme catalyses shikimate + ATP = 3-phosphoshikimate + ADP + H(+). The protein operates within metabolic intermediate biosynthesis; chorismate biosynthesis; chorismate from D-erythrose 4-phosphate and phosphoenolpyruvate: step 5/7. Functionally, catalyzes the specific phosphorylation of the 3-hydroxyl group of shikimic acid using ATP as a cosubstrate. The polypeptide is Shikimate kinase (Bacillus anthracis (strain A0248)).